A 218-amino-acid chain; its full sequence is uncharacterized protein (218 aa).

The N-terminal stretch at 1–17 is a signal peptide; it reads MLKKIIILFLGIFLLSS. A lipid anchor (N-palmitoyl cysteine) is attached at Cys18. Cys18 carries S-diacylglycerol cysteine lipidation. Positions 136-164 form a coiled coil; the sequence is YKEKKIEEELNQIKAMLKETKRDITKYTC.

It is found in the cell membrane. This is an uncharacterized protein from Rickettsia typhi (strain ATCC VR-144 / Wilmington).